The chain runs to 102 residues: NADH-quinone oxidoreductase subunit K 1 (102 aa).

A run of 3 helical transmembrane segments spans residues Leu-5–Val-25, Ile-30–Gly-50, and Val-62–Val-82.

Belongs to the complex I subunit 4L family. In terms of assembly, NDH-1 is composed of 14 different subunits. Subunits NuoA, H, J, K, L, M, N constitute the membrane sector of the complex.

The protein localises to the cell inner membrane. It carries out the reaction a quinone + NADH + 5 H(+)(in) = a quinol + NAD(+) + 4 H(+)(out). Its function is as follows. NDH-1 shuttles electrons from NADH, via FMN and iron-sulfur (Fe-S) centers, to quinones in the respiratory chain. The immediate electron acceptor for the enzyme in this species is believed to be ubiquinone. Couples the redox reaction to proton translocation (for every two electrons transferred, four hydrogen ions are translocated across the cytoplasmic membrane), and thus conserves the redox energy in a proton gradient. In Geotalea uraniireducens (strain Rf4) (Geobacter uraniireducens), this protein is NADH-quinone oxidoreductase subunit K 1.